Consider the following 1311-residue polypeptide: AF4/FMR2 family member 2 (1311 aa).

Disordered stretches follow at residues 94 to 187 (LVGI…LTQD), 204 to 229 (PQIG…GEDA), and 377 to 417 (TAGH…TKSV). The span at 101–111 (SVPQNPNNKNE) shows a compositional bias: polar residues. Positions 155–164 (SKPEWSRDSH) are enriched in basic and acidic residues. The span at 165–187 (NPSTVLASQASGQPNKMQTLTQD) shows a compositional bias: polar residues. Polar residues-rich tracts occupy residues 377 to 396 (TAGH…SQHL) and 403 to 417 (QKWN…TKSV). Position 430 is a phosphoserine (S430). Disordered regions lie at residues 457–530 (KAKP…KWQL), 574–726 (TNAS…DQEE), 818–867 (SLHA…IPEK), and 881–943 (PPCI…DKNI). Residues 465–477 (VNPPLATPQPPPA) show a composition bias toward pro residues. Residues 478–491 (VQASGGSGSSSESE) show a composition bias toward low complexity. Residue T517 is modified to Phosphothreonine. The segment covering 582 to 597 (EPKERPLLSLIREKAR) has biased composition (basic and acidic residues). Positions 615–625 (STTSETVSQRT) are enriched in polar residues. Over residues 655–668 (PKEKESVELHDPPR) the composition is skewed to basic and acidic residues. Residues 669–679 (GRNKATAHKPA) are compositionally biased toward basic residues. The span at 857 to 867 (PIEVAEKIPEK) shows a compositional bias: basic and acidic residues. Composition is skewed to pro residues over residues 883–892 (CISPAPPHKP) and 913–922 (FPPPLSPLPE).

Belongs to the AF4 family. In terms of tissue distribution, brain (most abundant in hippocampus and amygdala), placenta and lung.

The protein localises to the nucleus speckle. In terms of biological role, RNA-binding protein. Might be involved in alternative splicing regulation through an interaction with G-quartet RNA structure. The polypeptide is AF4/FMR2 family member 2 (Homo sapiens (Human)).